The following is a 342-amino-acid chain: Phenylalanine--tRNA ligase alpha subunit (342 aa).

E257 serves as a coordination point for Mg(2+).

The protein belongs to the class-II aminoacyl-tRNA synthetase family. Phe-tRNA synthetase alpha subunit type 1 subfamily. As to quaternary structure, tetramer of two alpha and two beta subunits. Mg(2+) serves as cofactor.

It is found in the cytoplasm. It catalyses the reaction tRNA(Phe) + L-phenylalanine + ATP = L-phenylalanyl-tRNA(Phe) + AMP + diphosphate + H(+). This chain is Phenylalanine--tRNA ligase alpha subunit, found in Legionella pneumophila subsp. pneumophila (strain Philadelphia 1 / ATCC 33152 / DSM 7513).